Reading from the N-terminus, the 2690-residue chain is Non-reducing polyketide synthase pigA (2690 aa).

One can recognise a Starter acyltransferase (SAT) domain in the interval 96–211 (NILLSPLVVI…AELSRVLQDF (116 aa)). C140 (nucleophile; for transacylase activity) is an active-site residue. H258 functions as the Proton donor/acceptor; for transacylase activity in the catalytic mechanism. The 417-residue stretch at 388-804 (ENDIAVIGMS…GSNASLIVTQ (417 aa)) folds into the Ketosynthase family 3 (KS3) domain. Catalysis depends on for beta-ketoacyl synthase activity residues C553, H688, and H727. Residues 915-1182 (FGGQISTFVG…VQRLAKQHPS (268 aa)) form the Malonyl-CoA:ACP transacylase (MAT) domain. Residues 1296–1426 (LTFVGYQDKD…GKVFFRSVDD (131 aa)) form an N-terminal hotdog fold region. A PKS/mFAS DH domain is found at 1296–1602 (LTFVGYQDKD…YAKVPKMSMS (307 aa)). The tract at residues 1323–1600 (LVSGHLIAQT…INYAKVPKMS (278 aa)) is product template (PT) domain. H1327 (proton acceptor; for dehydratase activity) is an active-site residue. The segment at 1454-1602 (ADDIIQGRNI…YAKVPKMSMS (149 aa)) is C-terminal hotdog fold. Residue D1510 is the Proton donor; for dehydratase activity of the active site. In terms of domain architecture, Carrier 1 spans 1657–1731 (PDISGKVRAM…GLLRCIQEAL (75 aa)). S1691 is modified (O-(pantetheine 4'-phosphoryl)serine). The segment at 1731-1764 (LGPSEGVEEETDNEEGEDGESSENPSVFTPSDAA) is disordered. The span at 1736–1751 (GVEEETDNEEGEDGES) shows a compositional bias: acidic residues. Over residues 1755–1764 (PSVFTPSDAA) the composition is skewed to polar residues. A Carrier 2 domain is found at 1768–1842 (SSAKADVAEF…EFDVKVNGKS (75 aa)). S1802 is modified (O-(pantetheine 4'-phosphoryl)serine). The tract at residues 1948 to 2255 (QTLERIKYLP…EVNIQRIFLA (308 aa)) is methyltransferase domain. One can recognise a Thioester reductase (TE) domain in the interval 2320–2564 (VTGATGSLGS…LSWTPVNDVA (245 aa)).

Requires pantetheine 4'-phosphate as cofactor.

It participates in secondary metabolite biosynthesis. Non-reducing polyketide synthase; part of the gene cluster that mediates the biosynthesis of azaphilone pigments (MonAzPs), a complex mixture of compounds with a common azaphilone skeleton very widely used as food colorants. PigA catalyzes the first step of MonAzPs biosynthesis and forms the hexaketide precursor from successive condensations of five malonyl-CoA units, with a simple acetyl-CoA starter unit. The starter acyl transferase (SAT) domain of pigA selects an acetyl-CoA starter unit, and the ketoacyl synthase (KS)-acyl transferase (AT)-acyl carrier protein (ACP) domains extend this starter unit five times with malonyl-CoA in five successive decarboxylative Claisen condensation cycles. The methyltransferase (MT) domain conducts a single C-methylation at C-4, most likely at the pentaketide stage. The reactive hexaketide chain then undergoes a product template (PT) domain-mediated C-2 to C-7 aldol cyclization to afford the first aromatic ring, followed by reductive release of the first pathway intermediate by the NADPH-dependent reductive release (R) domain. The role of esterase pigG is not clear, but it may play at most a supplementary role in the formation of the benzaldehyde produced by the pigA nrPKS. This very reactive benzaldehyde is intercepted by the pigC ketoreductase that to provide the first stable enzyme-free MonAzPs intermediate, 6-(4-hydroxy-2-oxopentyl)-3-methyl-2,4-dioxocyclohexane carbaldehyde, also known as M7PKS-1. The FAD-dependent monooxygenase pigN hydroxylates M7PKS-1 at C-4, which triggers the formation of the pyran ring. PigJ, pigK and pigD are involved in the acetylation of the pyran ring. PigJ and pigK form the two subunits of a dedicated fungal FAS that produces the side chain fatty acyl moiety of MonAzPs and pigD transfers the fatty acyl chain to the C-4 alcohol. PigM and pigO are involved in the elimination of the omega-1 alcohol. PigM acts as an O-acetyltransferase that synthesizes the putative O-11 acetyl intermediate whereas pigO eliminates acetic acid to yield an intermediate with a C10(11) double bond. The dehydration of the C-11 alcohol followed by the reduction of the C6(7) double bond by the NAD(P)H-dependent oxidoreductase pigE increases the electrophilicity of the C-5 ketone of the resulting acyl benzopyran. This in turn sets up the C-5 ketone for an intramolecular Knoevenagel aldol condensation with the C-20 enol of the side chain. This condensation affords the characteristic linear tricyclic carbon skeletons of the yellow pigments that serve as the common precursors for the classical yellow pigments monascin and ankaflavin, orange pigments rubopunctatin and monascorubrin, and red pigments ribropunctamine and monascorubramine. The FAD-dependent oxidoreductase pigF is especially invoved in the biosynthesis of orange and red pigments via desaturation of C6(7). The chain is Non-reducing polyketide synthase pigA from Monascus ruber (Mold).